We begin with the raw amino-acid sequence, 364 residues long: MTAAQIHSDCSVHMLPRHVKEDVEPIHLLGFNIARKPKWLQFVLLSLAIFILYIGYGYMQELIFKLPGMKPFGWTLTLIQFLIYSGCGYTECIIWHNTKRMIPWRIYGVIAFFTVATMGLSNASVGYLNYPTQVIFKCCKLIPVLIGGILIQGKRYGWIDIGAAMLMSLGIIMFTLADNKVSPNFDSRGYIMICGALLADAVIGNIQEKNMKKYGGSSNEMVLYSYGIGSVFIFAFVVLSGEVFSAIPFFLENSWKTFGYALILSCLGYLGVNVVLTHIKVFGALVAVTVTTLRKALTIILSFMLFSKPFTIEYVYAGSVVMLAIYLNLYSKNKTSWDNMIRRFVARAMGYHDVSVARKDPMTV.

The next 10 helical transmembrane spans lie at 39–59 (WLQFVLLSLAIFILYIGYGYM), 74–94 (WTLTLIQFLIYSGCGYTECII), 106–126 (IYGVIAFFTVATMGLSNASVG), 131–151 (PTQVIFKCCKLIPVLIGGILI), 157–177 (GWIDIGAAMLMSLGIIMFTLA), 187–206 (SRGYIMICGALLADAVIGNI), 231–251 (VFIFAFVVLSGEVFSAIPFFL), 257–277 (TFGYALILSCLGYLGVNVVLT), 281–301 (VFGALVAVTVTTLRKALTIIL), and 310–330 (FTIEYVYAGSVVMLAIYLNLY).

This sequence belongs to the nucleotide-sugar transporter family. SLC35B subfamily.

Its subcellular location is the golgi apparatus membrane. Functionally, mediates the transport of adenosine 3'-phospho 5'-phosphosulfate (PAPS), from cytosol into Golgi. PAPS is a universal sulfuryl donor for sulfation events that take place in the Golgi. This Caenorhabditis elegans protein is Adenosine 3'-phospho 5'-phosphosulfate transporter 2 (pst-2).